A 737-amino-acid chain; its full sequence is Methylcrotonoyl-CoA carboxylase subunit alpha, mitochondrial (737 aa).

Residues 1–33 (MASRLLLLPRRRSRHGGASLLLARLLSSSSSEA) constitute a mitochondrion transit peptide. In terms of domain architecture, Biotin carboxylation spans 38–485 (AVEKVLVANR…DTHFIERYQN (448 aa)). ATP contacts are provided by residues Lys153, 185–246 (ANKI…PRHI), Glu237, and His272. Residues 157–355 (KRIMGAAGVP…LVEWQIRIAN (199 aa)) enclose the ATP-grasp domain. Mn(2+) is bound by residues Glu312, Glu326, and Asn328. Arg330 is an active-site residue. Residues 636 to 665 (YRQTLRAEQSPDDSSQPSASSEARSHPKGS) are disordered. Residues 647–657 (DDSSQPSASSE) show a composition bias toward low complexity. Residues 656 to 732 (SEARSHPKGS…FDSSVLFTVK (77 aa)) enclose the Biotinyl-binding domain. Lys698 is modified (N6-biotinyllysine).

Probably a heterodimer composed of biotin-containing alpha subunits and beta subunits. Biotin is required as a cofactor. Mn(2+) serves as cofactor.

The protein localises to the mitochondrion matrix. It catalyses the reaction 3-methylbut-2-enoyl-CoA + hydrogencarbonate + ATP = 3-methyl-(2E)-glutaconyl-CoA + ADP + phosphate + H(+). It functions in the pathway amino-acid degradation; L-leucine degradation; (S)-3-hydroxy-3-methylglutaryl-CoA from 3-isovaleryl-CoA: step 2/3. Its function is as follows. Biotin-attachment subunit of the 3-methylcrotonyl-CoA carboxylase, an enzyme that catalyzes the conversion of 3-methylcrotonyl-CoA to 3-methylglutaconyl-CoA, a critical step for leucine and isovaleric acid catabolism. In Oryza sativa subsp. japonica (Rice), this protein is Methylcrotonoyl-CoA carboxylase subunit alpha, mitochondrial (MCCA).